Here is a 283-residue protein sequence, read N- to C-terminus: Formamidopyrimidine-DNA glycosylase (283 aa).

Pro-2 functions as the Schiff-base intermediate with DNA in the catalytic mechanism. Glu-3 acts as the Proton donor in catalysis. Lys-58 (proton donor; for beta-elimination activity) is an active-site residue. His-100, Arg-119, and Arg-162 together coordinate DNA. An FPG-type zinc finger spans residues 247 to 283 (DVYGREGEPCRRAGCTGTVTRITQSGRSSFYCGKCQR). Arg-273 serves as the catalytic Proton donor; for delta-elimination activity.

Belongs to the FPG family. As to quaternary structure, monomer. Requires Zn(2+) as cofactor.

It carries out the reaction Hydrolysis of DNA containing ring-opened 7-methylguanine residues, releasing 2,6-diamino-4-hydroxy-5-(N-methyl)formamidopyrimidine.. The catalysed reaction is 2'-deoxyribonucleotide-(2'-deoxyribose 5'-phosphate)-2'-deoxyribonucleotide-DNA = a 3'-end 2'-deoxyribonucleotide-(2,3-dehydro-2,3-deoxyribose 5'-phosphate)-DNA + a 5'-end 5'-phospho-2'-deoxyribonucleoside-DNA + H(+). In terms of biological role, involved in base excision repair of DNA damaged by oxidation or by mutagenic agents. Acts as a DNA glycosylase that recognizes and removes damaged bases. Has a preference for oxidized purines, such as 7,8-dihydro-8-oxoguanine (8-oxoG). Has AP (apurinic/apyrimidinic) lyase activity and introduces nicks in the DNA strand. Cleaves the DNA backbone by beta-delta elimination to generate a single-strand break at the site of the removed base with both 3'- and 5'-phosphates. The polypeptide is Formamidopyrimidine-DNA glycosylase (Ruegeria sp. (strain TM1040) (Silicibacter sp.)).